The primary structure comprises 231 residues: Lipoprotein-releasing system ATP-binding protein LolD (231 aa).

The ABC transporter domain maps to 9–230 (FSLKDVGKEY…LRAGELYDQN (222 aa)). An ATP-binding site is contributed by 45 to 52 (GASGSGKS).

The protein belongs to the ABC transporter superfamily. Lipoprotein translocase (TC 3.A.1.125) family. In terms of assembly, the complex is composed of two ATP-binding proteins (LolD) and two transmembrane proteins (LolC and LolE).

It localises to the cell inner membrane. Its function is as follows. Part of the ABC transporter complex LolCDE involved in the translocation of mature outer membrane-directed lipoproteins, from the inner membrane to the periplasmic chaperone, LolA. Responsible for the formation of the LolA-lipoprotein complex in an ATP-dependent manner. This Oleidesulfovibrio alaskensis (strain ATCC BAA-1058 / DSM 17464 / G20) (Desulfovibrio alaskensis) protein is Lipoprotein-releasing system ATP-binding protein LolD.